The following is a 398-amino-acid chain: O-methyltransferase mpaG (398 aa).

Serine 144 contacts (4E,8E)-10-(4,6-dihydroxy-7-methyl-3-oxo-1,3-dihydro-2-benzofuran-5-yl)-4,8-dimethyldeca-4,8-dienoate. Serine 144 serves as a coordination point for 4-farnesyl-3,5-dihydroxy-6-methylphthalide. Residue serine 144 coordinates 6-O-desmethylmycophenolate. Position 197 (asparagine 197) interacts with S-adenosyl-L-homocysteine. A (4E,8E)-10-(4,6-dihydroxy-7-methyl-3-oxo-1,3-dihydro-2-benzofuran-5-yl)-4,8-dimethyldeca-4,8-dienoate-binding site is contributed by tyrosine 199. Tyrosine 199 contacts 4-farnesyl-3,5-dihydroxy-6-methylphthalide. Residue tyrosine 199 participates in 6-O-desmethylmycophenolate binding. Residues tyrosine 203, aspartate 237, glycine 239, histidine 244, aspartate 245, aspartate 264, and arginine 265 each coordinate S-adenosyl-L-homocysteine. Aspartate 264 serves as a coordination point for S-adenosyl-L-methionine. 2 residues coordinate (4E,8E)-10-(4,6-dihydroxy-7-methyl-3-oxo-1,3-dihydro-2-benzofuran-5-yl)-4,8-dimethyldeca-4,8-dienoate: arginine 265 and glutamine 267. Arginine 265 provides a ligand contact to 6-O-desmethylmycophenolate. S-adenosyl-L-homocysteine is bound by residues aspartate 286, isoleucine 287, and histidine 302. Position 303 (serine 303) interacts with (4E,8E)-10-(4,6-dihydroxy-7-methyl-3-oxo-1,3-dihydro-2-benzofuran-5-yl)-4,8-dimethyldeca-4,8-dienoate. Serine 303 serves as a coordination point for 4-farnesyl-3,5-dihydroxy-6-methylphthalide. 6-O-desmethylmycophenolate is bound at residue serine 303. Histidine 306 functions as the Proton acceptor in the catalytic mechanism. Active-site residues include glutamate 335 and glutamate 362.

The protein belongs to the class I-like SAM-binding methyltransferase superfamily. Cation-independent O-methyltransferase family. COMT subfamily. Homodimer.

It is found in the cytoplasm. Its subcellular location is the cytosol. It catalyses the reaction (4E,8E)-10-(4,6-dihydroxy-7-methyl-3-oxo-1,3-dihydro-2-benzofuran-5-yl)-4,8-dimethyldeca-4,8-dienoate + S-adenosyl-L-methionine = (4E,8E)-10-(4-hydroxy-6-methoxy-7-methyl-3-oxo-1,3-dihydro-2-benzofuran-5-yl)-4,8-dimethyldeca-4,8-dienoate + S-adenosyl-L-homocysteine + H(+). The catalysed reaction is 4-farnesyl-3,5-dihydroxy-6-methylphthalide + S-adenosyl-L-methionine = 4-farnesyl-3,5-dihydroxy-6-methoxylphthalide + S-adenosyl-L-homocysteine + H(+). It carries out the reaction 6-O-desmethylmycophenolate + S-adenosyl-L-methionine = mycophenolate + S-adenosyl-L-homocysteine + H(+). The protein operates within secondary metabolite biosynthesis; terpenoid biosynthesis. In terms of biological role, O-methyltransferase; part of the gene cluster that mediates the biosynthesis of mycophenolic acid (MPA), the first isolated antibiotic natural product in the world obtained from a culture of Penicillium brevicompactum in 1893. MpaG methylates farnesyl-DHMP-3C (FDHMP-3C) to yield MFDHMP-3C. The first step of the pathway is the synthesis of 5-methylorsellinic acid (5MOA) by the cytosolic polyketide synthase mpaC. 5MOA is then converted to the phthalide compound 5,7-dihydroxy-4,6-dimethylphthalide (DHMP) by the endoplasmic reticulum-bound cytochrome P450 monooxygenase mpaDE. MpaDE first catalyzes hydroxylation of 5-MOA to 4,6-dihydroxy-2-(hydroxymethyl)-3-methylbenzoic acid (DHMB). MpaDE then acts as a lactone synthase that catalyzes the ring closure to convert DHMB into DHMP. The next step is the prenylation of DHMP by the Golgi apparatus-associated prenyltransferase mpaA to yield farnesyl-DHMP (FDHMP). The ER-bound oxygenase mpaB then mediates the oxidative cleavage the C19-C20 double bond in FDHMP to yield FDHMP-3C via a mycophenolic aldehyde intermediate. The O-methyltransferase mpaG catalyzes the methylation of FDHMP-3C to yield MFDHMP-3C. MpaG and mpaB can also switch the order in which they act and, in this case, the conversion of FDHMP to MFDHMP-3C can take place via 5-O-methyl-FDHMP (MFDHMP). After the cytosolic methylation of FDHMP-3C, MFDHMP-3C enters into peroxisomes probably via free diffusion due to its low molecular weight. Upon a peroxisomal CoA ligation reaction, catalyzed by a beta-oxidation component enzyme acyl-CoA ligase ACL891, MFDHMP-3C-CoA would then be restricted to peroxisomes for the following beta-oxidation pathway steps. The peroxisomal beta-oxidation machinery than converts MFDHMP-3C-CoA into MPA_CoA, via a beta-oxidation chain-shortening process. Finally mpaH acts as a peroxisomal acyl-CoA hydrolase with high substrate specificity toward MPA-CoA to release the final product MPA. MpaH can also hydrolyze DMMPA-CoA to release demethylmycophenolic acid (DMMPA) that is further converted to MPA by mpaG. The protein is O-methyltransferase mpaG of Penicillium brevicompactum.